Consider the following 130-residue polypeptide: Small ribosomal subunit protein uS11 (130 aa).

It belongs to the universal ribosomal protein uS11 family. Part of the 30S ribosomal subunit.

Located on the platform of the 30S subunit. The protein is Small ribosomal subunit protein uS11 of Thermoplasma acidophilum (strain ATCC 25905 / DSM 1728 / JCM 9062 / NBRC 15155 / AMRC-C165).